A 373-amino-acid polypeptide reads, in one-letter code: Quinolinate synthase (373 aa).

Iminosuccinate contacts are provided by His-46 and Ser-63. Residue Cys-109 participates in [4Fe-4S] cluster binding. Residues 142–144 (YMN) and Ser-163 contribute to the iminosuccinate site. Cys-232 serves as a coordination point for [4Fe-4S] cluster. Iminosuccinate is bound by residues 258 to 260 (HPE) and Thr-275. Cys-324 is a [4Fe-4S] cluster binding site.

The protein belongs to the quinolinate synthase family. Type 3 subfamily. [4Fe-4S] cluster is required as a cofactor.

It is found in the cytoplasm. The enzyme catalyses iminosuccinate + dihydroxyacetone phosphate = quinolinate + phosphate + 2 H2O + H(+). The protein operates within cofactor biosynthesis; NAD(+) biosynthesis; quinolinate from iminoaspartate: step 1/1. Catalyzes the condensation of iminoaspartate with dihydroxyacetone phosphate to form quinolinate. In Acidobacterium capsulatum (strain ATCC 51196 / DSM 11244 / BCRC 80197 / JCM 7670 / NBRC 15755 / NCIMB 13165 / 161), this protein is Quinolinate synthase.